The primary structure comprises 146 residues: Globin (146 aa).

Position 1 is an N-acetylalanine (Ala-1). A Globin domain is found at 1–146 (ALTEPQKTAL…LLTMLIKAHS (146 aa)). Positions 65 and 97 each coordinate heme b.

Belongs to the globin family. In terms of assembly, homodimer.

The sequence is that of Globin from Buccinum undatum (Common whelk).